A 139-amino-acid chain; its full sequence is Thyrotropin subunit beta (139 aa).

The signal sequence occupies residues 1-20; that stretch reads MELSVAMCGLLCLLFSQAVP. 6 disulfide bridges follow: Cys22–Cys72, Cys36–Cys87, Cys39–Cys127, Cys47–Cys103, Cys51–Cys105, and Cys108–Cys115. Asn43 is a glycosylation site (N-linked (GlcNAc...) asparagine).

This sequence belongs to the glycoprotein hormones subunit beta family. As to quaternary structure, heterodimer of a common alpha chain and a unique beta chain which confers biological specificity to thyrotropin, lutropin, follitropin and gonadotropin.

It is found in the secreted. Functionally, indispensable for the control of thyroid structure and metabolism. May play some role in the biological processes of the immature fishes. This chain is Thyrotropin subunit beta (tshb), found in Salmo salar (Atlantic salmon).